Here is a 524-residue protein sequence, read N- to C-terminus: 2-isopropylmalate synthase (524 aa).

Positions 12-274 (VIIFDTTLRD…WNNIETTMLT (263 aa)) constitute a Pyruvate carboxyltransferase domain. Residues aspartate 21, histidine 209, histidine 211, and asparagine 245 each contribute to the Mn(2+) site. The interval 398-524 (KLNSLTVIAG…EAVPAVAAAG (127 aa)) is regulatory domain.

It belongs to the alpha-IPM synthase/homocitrate synthase family. LeuA type 1 subfamily. Homodimer. Requires Mn(2+) as cofactor.

The protein localises to the cytoplasm. It catalyses the reaction 3-methyl-2-oxobutanoate + acetyl-CoA + H2O = (2S)-2-isopropylmalate + CoA + H(+). It functions in the pathway amino-acid biosynthesis; L-leucine biosynthesis; L-leucine from 3-methyl-2-oxobutanoate: step 1/4. Its function is as follows. Catalyzes the condensation of the acetyl group of acetyl-CoA with 3-methyl-2-oxobutanoate (2-ketoisovalerate) to form 3-carboxy-3-hydroxy-4-methylpentanoate (2-isopropylmalate). This is 2-isopropylmalate synthase from Rhodopseudomonas palustris (strain HaA2).